The primary structure comprises 350 residues: Probable transposase-like protein At4g04430 (350 aa).

2 disordered regions span residues 1-57 (MPSD…PSVN) and 307-328 (QIGQANPNEPPVSAAPEPQVAN). The span at 30-43 (SGVQGSGSRSGSTV) shows a compositional bias: low complexity.

Belongs to the transposase 24 family.

This chain is Probable transposase-like protein At4g04430, found in Arabidopsis thaliana (Mouse-ear cress).